The chain runs to 351 residues: S-adenosylmethionine:tRNA ribosyltransferase-isomerase (351 aa).

This sequence belongs to the QueA family. In terms of assembly, monomer.

It is found in the cytoplasm. It catalyses the reaction 7-aminomethyl-7-carbaguanosine(34) in tRNA + S-adenosyl-L-methionine = epoxyqueuosine(34) in tRNA + adenine + L-methionine + 2 H(+). It functions in the pathway tRNA modification; tRNA-queuosine biosynthesis. In terms of biological role, transfers and isomerizes the ribose moiety from AdoMet to the 7-aminomethyl group of 7-deazaguanine (preQ1-tRNA) to give epoxyqueuosine (oQ-tRNA). In Roseobacter denitrificans (strain ATCC 33942 / OCh 114) (Erythrobacter sp. (strain OCh 114)), this protein is S-adenosylmethionine:tRNA ribosyltransferase-isomerase.